The following is a 456-amino-acid chain: UDP-N-acetylmuramate--L-alanine ligase (456 aa).

114-120 (GTHGKTT) contacts ATP.

This sequence belongs to the MurCDEF family.

The protein localises to the cytoplasm. The enzyme catalyses UDP-N-acetyl-alpha-D-muramate + L-alanine + ATP = UDP-N-acetyl-alpha-D-muramoyl-L-alanine + ADP + phosphate + H(+). It participates in cell wall biogenesis; peptidoglycan biosynthesis. Cell wall formation. The sequence is that of UDP-N-acetylmuramate--L-alanine ligase from Porphyromonas gingivalis (strain ATCC 33277 / DSM 20709 / CIP 103683 / JCM 12257 / NCTC 11834 / 2561).